The chain runs to 175 residues: Colicin-B immunity protein (175 aa).

A run of 3 helical transmembrane segments spans residues 14 to 32, 104 to 121, and 149 to 168; these read ILYAFSIIGIIPLMAILIL, CFWGPVFYAILIYITLFY, and IYFTVLTMTYAILLMPLLVI.

The protein localises to the cell inner membrane. This protein is able to protect a cell, which harbors the plasmid ColB encoding colicin B, against colicin B. The protein is Colicin-B immunity protein (cbi) of Escherichia coli.